We begin with the raw amino-acid sequence, 154 residues long: 6,7-dimethyl-8-ribityllumazine synthase (154 aa).

5-amino-6-(D-ribitylamino)uracil-binding positions include Phe22, 56–58 (AFE), and 80–82 (AVI). Residue 85-86 (AT) coordinates (2S)-2-hydroxy-3-oxobutyl phosphate. Catalysis depends on His88, which acts as the Proton donor. Phe113 contributes to the 5-amino-6-(D-ribitylamino)uracil binding site. Arg127 is a (2S)-2-hydroxy-3-oxobutyl phosphate binding site.

The protein belongs to the DMRL synthase family.

It catalyses the reaction (2S)-2-hydroxy-3-oxobutyl phosphate + 5-amino-6-(D-ribitylamino)uracil = 6,7-dimethyl-8-(1-D-ribityl)lumazine + phosphate + 2 H2O + H(+). It functions in the pathway cofactor biosynthesis; riboflavin biosynthesis; riboflavin from 2-hydroxy-3-oxobutyl phosphate and 5-amino-6-(D-ribitylamino)uracil: step 1/2. Its function is as follows. Catalyzes the formation of 6,7-dimethyl-8-ribityllumazine by condensation of 5-amino-6-(D-ribitylamino)uracil with 3,4-dihydroxy-2-butanone 4-phosphate. This is the penultimate step in the biosynthesis of riboflavin. The sequence is that of 6,7-dimethyl-8-ribityllumazine synthase from Agathobacter rectalis (strain ATCC 33656 / DSM 3377 / JCM 17463 / KCTC 5835 / VPI 0990) (Eubacterium rectale).